The primary structure comprises 606 residues: Limonene synthase, chloroplastic (606 aa).

A chloroplast-targeting transit peptide spans 1–38; that stretch reads MAIINLPVPTNSSSEVNKHNHLRSCLPSGRATFTTLSA. R320, D357, D361, R497, and D500 together coordinate (2E)-geranyl diphosphate. 2 residues coordinate Mg(2+): D357 and D361. Residues 357–361 carry the DDXXD motif motif; that stretch reads DDIYD. D500, T504, and E508 together coordinate Mg(2+).

Belongs to the terpene synthase family. Tpsb subfamily. As to quaternary structure, monomer. Mg(2+) serves as cofactor. The cofactor is Mn(2+). In terms of tissue distribution, confined to fruits.

The protein localises to the plastid. The protein resides in the chloroplast. The enzyme catalyses (2E,6E)-farnesyl diphosphate = (E)-beta-farnesene + diphosphate. The catalysed reaction is (2E)-geranyl diphosphate = limonene + diphosphate. It catalyses the reaction (2E)-geranyl diphosphate = beta-pinene + diphosphate. It carries out the reaction (2E)-geranyl diphosphate = sabinene + diphosphate. The enzyme catalyses (2E)-geranyl diphosphate = beta-myrcene + diphosphate. The catalysed reaction is (2E)-geranyl diphosphate = alpha-pinene + diphosphate. It catalyses the reaction (2E)-geranyl diphosphate = terpinolene + diphosphate. Its pathway is secondary metabolite biosynthesis; terpenoid biosynthesis. Its function is as follows. Monoterpene synthase (mono-TPS) involved in the biosynthesis of monoterpenes natural products, constituent of coffee beverage aroma. Catalyzes the conversion of (2E)-geranyl diphosphate (GPP) into limonene, beta-pinene, sabinene and beta-myrcene, and, as minor products, alpha-pinene and alpha-terpinolene. Can also, with a low efficiency, use farnesyl pyrophosphate (FPP) as substrate to produce beta-farnesene. Not able to use geranylgeranyl pyrophosphate (GGPP) as substrate. The polypeptide is Limonene synthase, chloroplastic (Coffea arabica (Arabian coffee)).